The following is a 239-amino-acid chain: Beta-glucanase (239 aa).

Residues 1–25 form the signal peptide; the sequence is MKRVLLILVTGLFMSLCGITSSVSA. Residues 26–239 form the GH16 domain; that stretch reads QTGGSFFEPF…HYDWMRYRKK (214 aa). Cys-57 and Cys-86 form a disulfide bridge. Catalysis depends on Glu-134, which acts as the Nucleophile.

This sequence belongs to the glycosyl hydrolase 16 family.

It catalyses the reaction Hydrolysis of (1-&gt;4)-beta-D-glucosidic linkages in beta-D-glucans containing (1-&gt;3)- and (1-&gt;4)-bonds.. The sequence is that of Beta-glucanase (bglA) from Bacillus amyloliquefaciens (Bacillus velezensis).